Reading from the N-terminus, the 135-residue chain is Auxin-responsive protein SAUR66 (135 aa).

Belongs to the ARG7 family.

The protein localises to the cell membrane. Functionally, may promote auxin-stimulated organ elongation, such as hypocotyls, stamen filaments and petals. This Arabidopsis thaliana (Mouse-ear cress) protein is Auxin-responsive protein SAUR66.